We begin with the raw amino-acid sequence, 242 residues long: Protein HTATIP2 (242 aa).

Ala2 carries the post-translational modification N-acetylalanine. The tract at residues 2-25 is required for interaction with elongation factor EEF1A1; the sequence is AETEALSKLREDFRMQNKSVFILG. Ser27, Gly28, Glu29, Thr30, Arg52, Arg53, Leu92, Gly93, Tyr143, Lys147, Leu170, and Arg178 together coordinate NADPH. Catalysis depends on Tyr143, which acts as the Proton acceptor. Lys147 is a catalytic residue.

As to quaternary structure, monomer. Forms homodimers during oxidative stress. Interacts (via N-terminus) with elongation factor EEF1A1 (via middle-region); the interaction is direct and competes with EEF1A1 binding to guanyl-nucleotide exchange factor EEF1B2, thereby inhibiting GDP for GTP exchange and reactivation of EEF1A1. Interacts with nuclear transport receptors XPO4, IPO5/RANBP5, IPO7, IPO9 and KPNB1 as well as GCN1L1/GCN1 and LRPPRC probably through their HEAT repeats. Binds NCOA5/CIA.

The protein resides in the cytoplasm. In terms of biological role, represses translation by preventing reactivation of elongation factor eEF1A. May also inhibit nuclear import by competing with nuclear import substrates for binding to a subset of nuclear transport receptors. Has additionally been proposed to act as a redox sensor involved in cellular oxidative stress surveillance. In Pongo pygmaeus (Bornean orangutan), this protein is Protein HTATIP2 (HTATIP2).